We begin with the raw amino-acid sequence, 435 residues long: MSGLMFRFPFRRFVATMPDKTKYIAKSGTYPKGFLINGVSSGVKAKGALDLTMLVSEKPCNAAAVFTKNAFQAAPVRVSRETLQQTKGQGIQCLVVNSGCANAVTGSGGVQDARLITALADKAVLGRGDGGLPSTLVMSTGVIGQRLKMDKISSGVMKAIEGLGSSHEHWMRGAKAICTTDTFPKVVSQEFSVNGQTYRIAGLAKGAGMINPNLATLLGFFATDAPVAVEAVQQILREAVDKSFNAISIDGDTSTNDTIAFLANGASGGPEIDVSSPAYEELKQSVTGIAQKLSQLVVRDGEGATKFVTIRVRGAATEADAKLVAATISNSALVKTAFFGEDANWGRILCAIGYSGAIVNPKATSVSFVPADQTESLRLLVLGEPQNVDEERASEILSHDEFGLDVDLGSGNHETVSWTCDFSYEYVRINADYRS.

Substrate-binding residues include Thr179, Lys205, Thr216, Glu302, Asn430, and Ser435. The active-site Nucleophile is the Thr216.

The protein belongs to the ArgJ family. As to quaternary structure, heterodimer of an alpha and a beta chain. In terms of processing, the alpha and beta chains are autoproteolytically processed from a single precursor protein within the mitochondrion.

It localises to the mitochondrion matrix. The enzyme catalyses N(2)-acetyl-L-ornithine + L-glutamate = N-acetyl-L-glutamate + L-ornithine. The catalysed reaction is L-glutamate + acetyl-CoA = N-acetyl-L-glutamate + CoA + H(+). The protein operates within amino-acid biosynthesis; L-arginine biosynthesis; L-ornithine and N-acetyl-L-glutamate from L-glutamate and N(2)-acetyl-L-ornithine (cyclic): step 1/1. Its pathway is amino-acid biosynthesis; L-arginine biosynthesis; N(2)-acetyl-L-ornithine from L-glutamate: step 1/4. Catalyzes two activities which are involved in the cyclic version of arginine biosynthesis: the synthesis of acetylglutamate from glutamate and acetyl-CoA, and of ornithine by transacetylation between acetylornithine and glutamate. The polypeptide is Arginine biosynthesis bifunctional protein ArgJ, mitochondrial (Schizosaccharomyces japonicus (strain yFS275 / FY16936) (Fission yeast)).